The sequence spans 838 residues: Probable glucan 1,3-beta-glucosidase D (838 aa).

A compositionally biased stretch (basic and acidic residues) spans 1 to 23 (MPSHSRSRDRYRGRDESEPERDR). The tract at residues 1-298 (MPSHSRSRDR…GASDSDMDGA (298 aa)) is disordered. The Cytoplasmic portion of the chain corresponds to 1–310 (MPSHSRSRDR…GTPFWKKKKT (310 aa)). The segment covering 35–45 (DYEDDELDDDD) has biased composition (acidic residues). 4 stretches are compositionally biased toward basic and acidic residues: residues 111 to 124 (DSPR…DGDR), 149 to 164 (SRDD…EREA), 200 to 221 (AKLR…AKAE), and 234 to 246 (QPRR…EETP). The chain crosses the membrane as a helical; Signal-anchor for type II membrane protein span at residues 311–331 (WIAVGVVVVLLAIIIPVAVVV). Topologically, residues 332 to 838 (SKKNNEKKSD…PDFGDLPENY (507 aa)) are extracellular. The tract at residues 335–359 (NNEKKSDSTTDDTTPRNSNLDGISR) is disordered. N-linked (GlcNAc...) asparagine glycosylation is found at Asn-383, Asn-388, Asn-400, Asn-553, and Asn-565. Glu-604 functions as the Proton donor in the catalytic mechanism. N-linked (GlcNAc...) asparagine glycans are attached at residues Asn-643 and Asn-696. Catalysis depends on Glu-709, which acts as the Nucleophile.

Belongs to the glycosyl hydrolase 5 (cellulase A) family.

It is found in the cell membrane. The catalysed reaction is Successive hydrolysis of beta-D-glucose units from the non-reducing ends of (1-&gt;3)-beta-D-glucans, releasing alpha-glucose.. Functionally, glucosidase involved in the degradation of cellulosic biomass. Active on lichenan. This is Probable glucan 1,3-beta-glucosidase D (exgD) from Aspergillus terreus (strain NIH 2624 / FGSC A1156).